Reading from the N-terminus, the 466-residue chain is Cysteine--tRNA ligase (466 aa).

Zn(2+) is bound at residue Cys28. The 'HIGH' region signature appears at 30–40 (PTVYNYIHIGN). Cys208, His233, and Glu237 together coordinate Zn(2+). Residues 265–269 (KMSKS) carry the 'KMSKS' region motif. ATP is bound at residue Lys268. A Phosphoserine modification is found at Ser269.

It belongs to the class-I aminoacyl-tRNA synthetase family. Monomer. It depends on Zn(2+) as a cofactor.

Its subcellular location is the cytoplasm. The catalysed reaction is tRNA(Cys) + L-cysteine + ATP = L-cysteinyl-tRNA(Cys) + AMP + diphosphate. This Shouchella clausii (strain KSM-K16) (Alkalihalobacillus clausii) protein is Cysteine--tRNA ligase.